Here is a 290-residue protein sequence, read N- to C-terminus: UPF0761 membrane protein YihY (290 aa).

Transmembrane regions (helical) follow at residues 44 to 64 (LLSLVPLIAVVFALFAAFPMF), 104 to 124 (VGACGLIVTALLLMYAIDSAL), 140 to 160 (FAVYWMILTLGPLLAGASLAI), 183 to 203 (VLPLLLSWISFWLLYSIVPTT), 210 to 230 (AIVGAFVAALLFEAGKKGFAL), and 244 to 264 (VLAVIPILFVWVYWTWCIVLL).

The protein belongs to the UPF0761 family.

The protein localises to the cell inner membrane. The protein is UPF0761 membrane protein YihY of Salmonella arizonae (strain ATCC BAA-731 / CDC346-86 / RSK2980).